The chain runs to 298 residues: Phosphatidylserine decarboxylase proenzyme (298 aa).

Active-site charge relay system; for autoendoproteolytic cleavage activity residues include D113, H169, and S256. The active-site Schiff-base intermediate with substrate; via pyruvic acid; for decarboxylase activity is the S256. Residue S256 is modified to Pyruvic acid (Ser); by autocatalysis.

Belongs to the phosphatidylserine decarboxylase family. PSD-B subfamily. Prokaryotic type II sub-subfamily. Heterodimer of a large membrane-associated beta subunit and a small pyruvoyl-containing alpha subunit. It depends on pyruvate as a cofactor. Post-translationally, is synthesized initially as an inactive proenzyme. Formation of the active enzyme involves a self-maturation process in which the active site pyruvoyl group is generated from an internal serine residue via an autocatalytic post-translational modification. Two non-identical subunits are generated from the proenzyme in this reaction, and the pyruvate is formed at the N-terminus of the alpha chain, which is derived from the carboxyl end of the proenzyme. The autoendoproteolytic cleavage occurs by a canonical serine protease mechanism, in which the side chain hydroxyl group of the serine supplies its oxygen atom to form the C-terminus of the beta chain, while the remainder of the serine residue undergoes an oxidative deamination to produce ammonia and the pyruvoyl prosthetic group on the alpha chain. During this reaction, the Ser that is part of the protease active site of the proenzyme becomes the pyruvoyl prosthetic group, which constitutes an essential element of the active site of the mature decarboxylase.

The protein localises to the cell membrane. It catalyses the reaction a 1,2-diacyl-sn-glycero-3-phospho-L-serine + H(+) = a 1,2-diacyl-sn-glycero-3-phosphoethanolamine + CO2. Its pathway is phospholipid metabolism; phosphatidylethanolamine biosynthesis; phosphatidylethanolamine from CDP-diacylglycerol: step 2/2. In terms of biological role, catalyzes the formation of phosphatidylethanolamine (PtdEtn) from phosphatidylserine (PtdSer). This chain is Phosphatidylserine decarboxylase proenzyme, found in Desulfitobacterium hafniense (strain DSM 10664 / DCB-2).